The chain runs to 208 residues: Capsid protein (208 aa).

The span at Met1–Lys12 shows a compositional bias: basic and acidic residues. The interval Met1 to Gln23 is disordered. Positions Ala13–Arg22 are enriched in basic residues.

It is found in the virion. Its function is as follows. Capsid protein self-assembles to form a quasi spherical capsid, about 25-35 nm. This chain is Capsid protein, found in Pelargonium zonate spot virus (isolate Tomato/Italy/1982) (PZSV).